A 397-amino-acid chain; its full sequence is MRDTRFPCLCGIAASTLLFATTPAIAGEAPADRLKALVDAAVQPVMKANDIPGLAVAISLKGEPHYFSYGLASKEDGRRVTPETLFEIGSVSKTFTATLAGYALTQDKMRLDDRASQHWPALQGSRFDGISLLDLATYTAGGLPLQFPDSVQKDQAQIRDYYRQWQPTYAPGSQRLYSNPSIGLFGYLAARSLGQPFERLMEQQVFPALGLEQTHLDVPEAALAQYAQGYGKDDRPLRVGPGPLDAEGYGVKTSAADLLRFVDANLHPERLDRPWAQALDATHRGYYKVGDMTQGLGWEAYDWPISLKRLQAGNSTPMALQPHRIARLPAPQALEGQRLLNKTGSTNGFGAYVAFVPGRDLGLVILANRNYPNAERVKIAYAILSGLEQQGKVPLKR.

The N-terminal stretch at 1-26 (MRDTRFPCLCGIAASTLLFATTPAIA) is a signal peptide. Serine 90 functions as the Acyl-ester intermediate in the catalytic mechanism. Residues serine 90, glutamine 146, tyrosine 177, asparagine 179, and asparagine 370 each coordinate a beta-lactam. Catalysis depends on tyrosine 177, which acts as the Proton acceptor.

It belongs to the class-C beta-lactamase family. As to quaternary structure, monomer.

The protein resides in the periplasm. It carries out the reaction a beta-lactam + H2O = a substituted beta-amino acid. Class C beta-lactamase which confers resistance to penicillins and cephalosporins. Has nitrocefin-hydrolyzing activity. This is Beta-lactamase (ampC) from Pseudomonas aeruginosa (strain ATCC 15692 / DSM 22644 / CIP 104116 / JCM 14847 / LMG 12228 / 1C / PRS 101 / PAO1).